The primary structure comprises 550 residues: Formin-binding protein 1-like (550 aa).

The region spanning 1 to 263 is the F-BAR domain; it reads MSWGTELWDQ…AAKSVDERRD (263 aa). Coiled-coil stretches lie at residues 66 to 258 and 334 to 426; these read FTSC…AKSV and LEDF…QRSE. The region spanning 339–416 is the REM-1 domain; the sequence is HLPPEQRRKR…IHKNEAWLSE (78 aa). Over residues 423–432 the composition is skewed to basic and acidic residues; it reads QRSERRHSAE. A disordered region spans residues 423-467; it reads QRSERRHSAEANHLVAQGRESPEGSYTEDANQEGRVQPQPHAHPE. Residues 479–540 enclose the SH3 domain; sequence PAIGHCKSLY…PTSYIDITLE (62 aa).

It belongs to the FNBP1 family. Homodimerizes, the dimers can polymerize end-to-end to form filamentous structures. Interacts with GTP-bound cdc42 and wasl/n-wasp.

It localises to the cytoplasm. The protein localises to the cytoskeleton. The protein resides in the cell cortex. It is found in the cytoplasmic vesicle. Its subcellular location is the cell membrane. Required to coordinate membrane tubulation with reorganization of the actin cytoskeleton during endocytosis. Promotes cdc42-induced actin polymerization by activating the wasl-waspip complex, the predominant form of wasl/n-wasp in cells. Essential for autophagy of intracellular bacterial pathogens. In Xenopus tropicalis (Western clawed frog), this protein is Formin-binding protein 1-like (fnbp1l).